A 28-amino-acid polypeptide reads, in one-letter code: Cruzioseptin-3 (28 aa).

The residue at position 25 (Q25) is a Glutamine amide. The propeptide occupies 27 to 28 (EQ).

Expressed by the skin glands.

The protein resides in the secreted. Its function is as follows. Has antimicrobial activity against Gram-negative bacterium E.coli (MIC=13.32 uM), against Gram-positive bacterium S.aureus (MIC=13.32 uM) and against fungus C.albicans (MIC=13.32 uM). At higher concentrations also has a bactericidal and fungicidal effect. Has hemagglutinating activity against horse erythrocytes. The polypeptide is Cruzioseptin-3 (Cruziohyla calcarifer (Splendid leaf frog)).